The following is a 456-amino-acid chain: Proline-specific permease ProY (456 aa).

Residues 1–17 (MESNNKLKRGLSTRHIR) are Cytoplasmic-facing. The next 2 membrane-spanning stretches (helical) occupy residues 18-38 (FMAL…DAIK) and 39-59 (MAGP…YIIM). Over 60–95 (RALGEMSVHNPAASSFSRYAQENLGPLAGYITGWTY) the chain is Cytoplasmic. A run of 2 helical transmembrane segments spans residues 96-116 (CFEI…YMGV) and 117-137 (WFPA…ICAI). At 138 to 156 (NLMSVKVFGELEFWFSFFK) the chain is on the cytoplasmic side. Residues 157–177 (VATIIIMIVAGIGIIVWGIGN) traverse the membrane as a helical segment. Residues 178–197 (GGQPTGIHNLWSNGGFFSNG) lie on the Periplasmic side of the membrane. A helical transmembrane segment spans residues 198 to 218 (WLGMIMSLQMVMFAYGGIEII). Topologically, residues 219–242 (GITAGEAKDPEKSIPRAINSVPMR) are cytoplasmic. Residues 243-263 (ILVFYVGTLFVIMSIYPWNQV) traverse the membrane as a helical segment. Topologically, residues 264-277 (GTNGSPFVLTFQHM) are periplasmic. Residues 278–298 (GITFAASILNFVVLTASLSAI) traverse the membrane as a helical segment. Over 299 to 331 (NSDVFGVGRMLHGMAEQGSAPKVFAKTSRRGIP) the chain is Cytoplasmic. The helical transmembrane segment at 332 to 352 (WVTVLVMTIALLFAVYLNYIM) threads the bilayer. The Periplasmic segment spans residues 353 to 355 (PEN). A helical membrane pass occupies residues 356–376 (VFLVIASLATFATVWVWIMIL). Over 377 to 399 (LSQIAFRRRLPPEEVKALKFKVP) the chain is Cytoplasmic. A helical membrane pass occupies residues 400 to 420 (GGVVTTIAGLIFLVFIIALIG). Topologically, residues 421–424 (YHPD) are periplasmic. A helical transmembrane segment spans residues 425–445 (TRISLYVGFAWIVLLLIGWIF). Residues 446–456 (KRRRDRQLAQA) lie on the Cytoplasmic side of the membrane.

This sequence belongs to the amino acid-polyamine-organocation (APC) superfamily. Amino acid transporter (AAT) (TC 2.A.3.1) family.

Its subcellular location is the cell inner membrane. Permease that is involved in the transport across the cytoplasmic membrane of proline. The sequence is that of Proline-specific permease ProY (proY) from Salmonella typhimurium (strain LT2 / SGSC1412 / ATCC 700720).